The following is a 226-amino-acid chain: High affinity heme transporter (226 aa).

An N-terminal signal peptide occupies residues 1-20; the sequence is MISLKIYFVLIFLFLKGINS. The tract at residues 72-101 is heme binding; the sequence is CDTTILSETNNVTGSCYVANCANDTVLEIC. Ser199 is lipidated: GPI-anchor amidated serine. Positions 200–226 are cleaved as a propeptide — removed in mature form; that stretch reads SASSTIFKPSYFISCLLSVGLYLVLNF.

It localises to the cell membrane. The protein localises to the vacuole membrane. High affinity heme transporter involved in the assimilation of exogenous heme during conditions of low cellular iron. The polypeptide is High affinity heme transporter (Schizosaccharomyces pombe (strain 972 / ATCC 24843) (Fission yeast)).